Consider the following 319-residue polypeptide: Putative GPI-anchor transamidase (319 aa).

The N-terminal stretch at 1–16 is a signal peptide; that stretch reads MRHVLLIFCAIIATEA. Active-site residues include histidine 156 and cysteine 198. Asparagine 257 carries N-linked (GlcNAc...) asparagine glycosylation.

The protein belongs to the peptidase C13 family.

The protein operates within glycolipid biosynthesis; glycosylphosphatidylinositol-anchor biosynthesis. Its function is as follows. Mediates GPI anchoring in the endoplasmic reticulum, by replacing a protein's C-terminal GPI attachment signal peptide with a pre-assembled GPI. During this transamidation reaction, the GPI transamidase forms a carbonyl intermediate with the substrate protein. This Caenorhabditis elegans protein is Putative GPI-anchor transamidase.